The chain runs to 1136 residues: Probable RNA-dependent RNA polymerase 2 (1136 aa).

A disordered region spans residues 965–989; that stretch reads SGDSGALSSSSAQPSPTYDPDLEVP. Positions 967–980 are enriched in low complexity; sequence DSGALSSSSAQPSP.

This sequence belongs to the RdRP family.

It carries out the reaction RNA(n) + a ribonucleoside 5'-triphosphate = RNA(n+1) + diphosphate. Probably involved in the RNA silencing pathway and required for the generation of small interfering RNAs (siRNAs). In Oryza sativa subsp. japonica (Rice), this protein is Probable RNA-dependent RNA polymerase 2 (RDR2).